We begin with the raw amino-acid sequence, 142 residues long: MVLSADDKANIKATWEKIGGHGAEYGAEALERMFASFPTTKTYFPHFDVSHGSAQVKSHGKKVADALANAAHHLDDLPGALSALSDLHAHKLRVDPVNFKLLGHCLLVTLATHLQAGLTPAAHASLDKFLASVSTVLTSKYR.

The Globin domain maps to 2-142 (VLSADDKANI…VSTVLTSKYR (141 aa)). At S4 the chain carries Phosphoserine. Residues K8 and K12 each carry the N6-succinyllysine modification. Position 17 is an N6-acetyllysine; alternate (K17). Residue K17 is modified to N6-succinyllysine; alternate. Y25 bears the Phosphotyrosine mark. S36 is modified (phosphoserine). Residue K41 is modified to N6-succinyllysine. Position 50 is a phosphoserine (S50). H59 is a binding site for O2. H88 is a binding site for heme b. Residue T109 is modified to Phosphothreonine. S125 and S132 each carry phosphoserine. Phosphothreonine is present on residues T135 and T138. S139 bears the Phosphoserine mark.

This sequence belongs to the globin family. In terms of assembly, heterotetramer of two alpha chains and two beta chains. As to expression, red blood cells.

Its function is as follows. Involved in oxygen transport from the lung to the various peripheral tissues. Functionally, hemopressin acts as an antagonist peptide of the cannabinoid receptor CNR1. Hemopressin-binding efficiently blocks cannabinoid receptor CNR1 and subsequent signaling. The chain is Hemoglobin subunit alpha (HBA) from Cricetomys gambianus (Northern giant pouched rat).